Reading from the N-terminus, the 467-residue chain is Interleukin-6 receptor subunit alpha (467 aa).

An N-terminal signal peptide occupies residues 1–19 (MLAVGCALLTALLAAPGMA). Residues 20–112 (LAPRGCSKLE…AGSVRLLVDA (93 aa)) form the Ig-like C2-type domain. The Extracellular segment spans residues 20 to 365 (LAPRGCSKLE…VQDSASVPLP (346 aa)). 4 disulfides stabilise this stretch: cysteine 25–cysteine 193, cysteine 47–cysteine 96, cysteine 121–cysteine 132, and cysteine 165–cysteine 176. Residues asparagine 55 and asparagine 93 are each glycosylated (N-linked (GlcNAc...) asparagine). 2 consecutive Fibronectin type-III domains span residues 113 to 217 (PPEE…LQPD) and 218 to 316 (PPVN…IPWT). Residues asparagine 221 and asparagine 245 are each glycosylated (N-linked (GlcNAc...) asparagine). The short motif at 303–307 (WSEWS) is the WSXWS motif element. The tract at residues 315-357 (WTESRSSPAETELPLSTQAPTTNEDDEDISSKESANATSLPVQ) is disordered. Composition is skewed to polar residues over residues 317-336 (ESRS…APTT) and 346-357 (KESANATSLPVQ). A glycan (N-linked (GlcNAc...) asparagine) is linked at asparagine 350. A glycan (O-linked (GlcNAc) threonine) is linked at threonine 352. The helical transmembrane segment at 366–386 (TFLVAGGSLAFGTLLCIGIIL) threads the bilayer. At 387 to 467 (RFKKTGQLQA…VSNRDYFFPR (81 aa)) the chain is on the cytoplasmic side. The disordered stretch occupies residues 428–467 (ISPPVSPNSLGDNTSRNSRPEARGPQSPYDVSNRDYFFPR).

This sequence belongs to the type I cytokine receptor family. Type 3 subfamily. As to quaternary structure, component of a hexamer of two molecules each of IL6, IL6R and IL6ST; first binds to IL6 to associate with the signaling subunit IL6ST. Interacts (via N-terminal ectodomain) with SORL1; this interaction may affect IL6-binding to IL6R, hence decrease IL6 'classic-signaling'. Also interacts with SORL1; this interaction leads to soluble IL6R internalization. May form a trimeric complex with the soluble SORL1 ectodomain and circulating IL6 receptor; this interaction might stabilize circulating IL6, hence promote IL6 'trans-signaling'. Post-translationally, a short soluble form is also released from the membrane by proteolysis. The sIL6R is formed by limited proteolysis of membrane-bound receptors, a process referred to as ectodomain shedding. mIL6R is cleaved by the proteases ADAM10 and ADAM17. In terms of processing, glycosylated. Glycosylation is dispensable for transport, signaling, and cell-surface turnover. Glycosylation at Asn-55 is a protease-regulatory exosite. Glycosylation is required for ADAM17-mediated proteolysis. Expressed in liver.

Its subcellular location is the cell membrane. It localises to the secreted. Its activity is regulated as follows. Classic and trans-signaling are both inhibited by tocilizumab, a humanized monoclonal antibody that blocks interleukin IL6R signaling. Part of the receptor for interleukin 6. Binds to IL6 with low affinity, but does not transduce a signal. Signal activation necessitate an association with IL6ST. Activation leads to the regulation of the immune response, acute-phase reactions and hematopoiesis. The interaction with membrane-bound IL6R and IL6ST stimulates 'classic signaling', the restricted expression of the IL6R limits classic IL6 signaling to only a few tissues such as the liver and some cells of the immune system. Whereas the binding of IL6 and soluble IL6R to IL6ST stimulates 'trans-signaling'. Alternatively, 'cluster signaling' occurs when membrane-bound IL6:IL6R complexes on transmitter cells activate IL6ST receptors on neighboring receiver cells. Functionally, signaling via the membrane-bound IL6R is mostly regenerative and anti-inflammatory. Drives naive CD4(+) T cells to the Th17 lineage, through 'cluster signaling' by dendritic cells. Its function is as follows. Soluble form of IL6 receptor (sIL6R) that acts as an agonist of IL6 activity. The IL6:sIL6R complex (hyper-IL6) binds to IL6ST/gp130 on cell surfaces and induces signaling also on cells that do not express membrane-bound IL6R in a process called IL6 'trans-signaling'. sIL6R is causative for the pro-inflammatory properties of IL6 and an important player in the development of chronic inflammatory diseases. In complex with IL6, is required for induction of VEGF production. Plays a protective role during liver injury, being required for maintenance of tissue regeneration. 'Trans-signaling' in central nervous system regulates energy and glucose homeostasis. This is Interleukin-6 receptor subunit alpha (IL6R) from Sus scrofa (Pig).